The primary structure comprises 357 residues: Putative electron transport protein YccM (357 aa).

Over 1–36 the chain is Cytoplasmic; it reads MAENKRTRWQRRPGTTGGKLPWNDWRNATTWRKATQ. Residues 37-54 form a helical membrane-spanning segment; sequence LLLLAMNIYIAITFWYWV. At 55-91 the chain is on the periplasmic side; sequence RYYETASSTTFVARPGGIEGWLPIAGLMNLKYSLVTG. Residues 92–114 form a helical membrane-spanning segment; it reads QLPSVHAAAMLLLVAFIVISLLL. At 115-158 the chain is on the cytoplasmic side; the sequence is KKAFCSWLCPVGTLSELIGDLGNKLFGRQCVLPRWLDIPLRGVK. The helical transmembrane segment at 159 to 181 threads the bilayer; the sequence is YLLLSFFIYIALLMPAQAIHYFM. The Periplasmic portion of the chain corresponds to 182–195; it reads LSPYSVVMDVKMLD. Residues 196 to 218 form a helical membrane-spanning segment; sequence FFRHMGTATLISVTVLLIASLFI. Residues 219-309 lie on the Cytoplasmic side of the membrane; sequence RHAWCRYLCP…KPAANKKAFA (91 aa). 2 4Fe-4S ferredoxin-type domains span residues 242-270 and 269-299; these read FKIR…VDKL and KLIQ…FSLQ. C251, C254, C257, C261, C278, C281, C284, and C288 together coordinate [4Fe-4S] cluster. The chain crosses the membrane as a helical span at residues 310-332; it reads LSGWLMTLLVLGIMFAVIGYAMY. At 333–357 the chain is on the periplasmic side; that stretch reads AGVWQSPVPEELYRRLIPQAPMIGH.

Its subcellular location is the cell inner membrane. The chain is Putative electron transport protein YccM (yccM) from Escherichia coli (strain K12).